We begin with the raw amino-acid sequence, 380 residues long: Elongation factor Ts, mitochondrial (380 aa).

This sequence belongs to the EF-Ts family.

The protein localises to the mitochondrion. Associates with the EF-Tu.GDP complex and induces the exchange of GDP to GTP. It remains bound to the aminoacyl-tRNA.EF-Tu.GTP complex up to the GTP hydrolysis stage on the ribosome. In Plasmodium chabaudi chabaudi, this protein is Elongation factor Ts, mitochondrial.